A 188-amino-acid chain; its full sequence is VQ motif-containing protein 18 (188 aa).

Disordered stretches follow at residues 1–20 (MEIT…VSMN), 58–92 (LTGK…HQPV), and 157–188 (GFIF…HNSS). The VQ motif lies at 51–60 (FRSLVQSLTG). A compositionally biased stretch (low complexity) spans 161-179 (NNNNNNNNNNNNNNNNNTN).

It is found in the nucleus. Its function is as follows. May function as positive regulator of plant growth. The protein is VQ motif-containing protein 18 of Arabidopsis thaliana (Mouse-ear cress).